Consider the following 469-residue polypeptide: 3-isopropylmalate dehydratase large subunit (469 aa).

The [4Fe-4S] cluster site is built by Cys347, Cys408, and Cys411.

Belongs to the aconitase/IPM isomerase family. LeuC type 1 subfamily. Heterodimer of LeuC and LeuD. [4Fe-4S] cluster serves as cofactor.

The enzyme catalyses (2R,3S)-3-isopropylmalate = (2S)-2-isopropylmalate. It participates in amino-acid biosynthesis; L-leucine biosynthesis; L-leucine from 3-methyl-2-oxobutanoate: step 2/4. Functionally, catalyzes the isomerization between 2-isopropylmalate and 3-isopropylmalate, via the formation of 2-isopropylmaleate. In Haemophilus influenzae (strain PittEE), this protein is 3-isopropylmalate dehydratase large subunit.